The primary structure comprises 562 residues: Nicotinate phosphoribosyltransferase (562 aa).

Nicotinate contacts are provided by Tyr36, Phe183, and Thr225. Residue His228 is modified to Phosphohistidine. 5-phospho-alpha-D-ribose 1-diphosphate is bound at residue Thr397.

Belongs to the NAPRTase family. Requires Mg(2+) as cofactor. The cofactor is Mn(2+). Post-translationally, transiently phosphorylated on a His residue during the reaction cycle. Phosphorylation strongly increases the affinity for substrates and increases the rate of nicotinate D-ribonucleotide production. Dephosphorylation regenerates the low-affinity form of the enzyme, leading to product release.

It catalyses the reaction nicotinate + 5-phospho-alpha-D-ribose 1-diphosphate + ATP + H2O = nicotinate beta-D-ribonucleotide + ADP + phosphate + diphosphate. Its pathway is cofactor biosynthesis; NAD(+) biosynthesis; nicotinate D-ribonucleotide from nicotinate: step 1/1. Its function is as follows. Catalyzes the first step in the biosynthesis of NAD from nicotinic acid, the ATP-dependent synthesis of beta-nicotinate D-ribonucleotide from nicotinate and 5-phospho-D-ribose 1-phosphate. Helps prevent cellular oxidative stress via its role in NAD biosynthesis. This chain is Nicotinate phosphoribosyltransferase, found in Caenorhabditis elegans.